The following is a 72-amino-acid chain: Translation initiation factor IF-1 (72 aa).

Residues 1 to 72 (MSKEDSFEME…SKGRITYRAR (72 aa)) form the S1-like domain.

It belongs to the IF-1 family. Component of the 30S ribosomal translation pre-initiation complex which assembles on the 30S ribosome in the order IF-2 and IF-3, IF-1 and N-formylmethionyl-tRNA(fMet); mRNA recruitment can occur at any time during PIC assembly.

The protein localises to the cytoplasm. One of the essential components for the initiation of protein synthesis. Stabilizes the binding of IF-2 and IF-3 on the 30S subunit to which N-formylmethionyl-tRNA(fMet) subsequently binds. Helps modulate mRNA selection, yielding the 30S pre-initiation complex (PIC). Upon addition of the 50S ribosomal subunit IF-1, IF-2 and IF-3 are released leaving the mature 70S translation initiation complex. The chain is Translation initiation factor IF-1 from Pseudomonas savastanoi pv. phaseolicola (strain 1448A / Race 6) (Pseudomonas syringae pv. phaseolicola (strain 1448A / Race 6)).